An 830-amino-acid polypeptide reads, in one-letter code: Phenylalanine--tRNA ligase beta subunit (830 aa).

One can recognise a tRNA-binding domain in the interval 39–158 (GQSLDGVVVG…DDTPVGTPFP (120 aa)). The B5 domain occupies 417-492 (PAEKTIALRP…RLHGYDQIPE (76 aa)). Residues Asp-470, Asp-476, Glu-479, and Glu-480 each coordinate Mg(2+). Residues 490–510 (IPEPERVPVPSRTPEQPPEET) form a disordered region. Residues 736 to 828 (SRFPVVDRDL…LAENHGARLR (93 aa)) enclose the FDX-ACB domain.

This sequence belongs to the phenylalanyl-tRNA synthetase beta subunit family. Type 1 subfamily. In terms of assembly, tetramer of two alpha and two beta subunits. The cofactor is Mg(2+).

The protein localises to the cytoplasm. The catalysed reaction is tRNA(Phe) + L-phenylalanine + ATP = L-phenylalanyl-tRNA(Phe) + AMP + diphosphate + H(+). This Salinibacter ruber (strain DSM 13855 / M31) protein is Phenylalanine--tRNA ligase beta subunit.